The chain runs to 609 residues: Zinc metalloproteinase-disintegrin-like VMP-III (609 aa).

A signal peptide spans 1–20; it reads MIQVLLVTICLAAFPYQGSS. Residues 21–189 constitute a propeptide that is removed on maturation; sequence IILESGNVND…KKASQLVVTA (169 aa). Positions 198–393 constitute a Peptidase M12B domain; sequence RFVELFLVVD…HNPECILNEP (196 aa). Positions 201 and 285 each coordinate Ca(2+). Disulfide bonds link C308–C388, C348–C372, and C350–C355. H333 contacts Zn(2+). E334 is a catalytic residue. Residues H337 and H343 each contribute to the Zn(2+) site. N-linked (GlcNAc...) asparagine glycosylation occurs at N371. The Ca(2+) site is built by C388, N391, V403, N406, L408, E410, E413, and D416. The Disintegrin domain occupies 401-487; the sequence is PPVCGNELLE…ECPADVFHKN (87 aa). 14 disulfide bridges follow: C404–C433, C415–C428, C417–C423, C427–C450, C441–C447, C446–C472, C459–C479, C466–C498, C491–C503, C510–C560, C525–C571, C538–C548, C555–C597, and C591–C602. A D/ECD-tripeptide motif is present at residues 465–467; it reads ECD. Ca(2+)-binding residues include D467, P468, E470, D482, and V483.

It belongs to the venom metalloproteinase (M12B) family. P-III subfamily. P-IIIa sub-subfamily. Monomer. The cofactor is Zn(2+). In terms of tissue distribution, expressed by the venom gland.

The protein localises to the secreted. In terms of biological role, snake venom metalloproteinase that impairs hemostasis in the envenomed animal. This chain is Zinc metalloproteinase-disintegrin-like VMP-III, found in Crotalus viridis viridis (Prairie rattlesnake).